An 876-amino-acid chain; its full sequence is Leucine--tRNA ligase (876 aa).

The 'HIGH' region motif lies at 42–52; sequence PYPSGKLHMGH. A 'KMSKS' region motif is present at residues 634-638; the sequence is KMSKS. Lys-637 lines the ATP pocket.

The protein belongs to the class-I aminoacyl-tRNA synthetase family.

It localises to the cytoplasm. The catalysed reaction is tRNA(Leu) + L-leucine + ATP = L-leucyl-tRNA(Leu) + AMP + diphosphate. In Neisseria meningitidis serogroup B (strain ATCC BAA-335 / MC58), this protein is Leucine--tRNA ligase.